Here is an 828-residue protein sequence, read N- to C-terminus: MTRSPLRRLIFGALRRLLYLWVRSETINQSAMSLQLDRSRPVFYALPSPSLTDLAVLDHECTKAGLPRPVLPVAVGTLHEPAGFFYLTPDPDWLGRHDKRGAPPTLERVIAAVSQHAEEDAQIIPVSVFWGQTPASESSPWKLLFADSWAVTGRLRRLLTILILGRKTRVQFSAPIQVRDLVQHNKGHERTVRMAQRLMRVHFRNLKTAVIGPDISHRRNLVKGLVHAPLVRQAINEQAQRENIPVAKAEAQALRYGNEIASDYTYTAIRFLEVVLSWFWNKIYDGIKVNHIEQVQGIAPGHEVIYVPCHRSHIDYLLLSYLLFRNGLTPPHIAAGINLNMPVIGGLLRRGGAFFMRRTFKGNPLYTAVFNEYLHTLFTKGFPVEYFVEGGRSRTGRMLQPRTGMLAITLRSFLRSSRTPIVFVPVYIGYERVLEGRTYLGELRGASKKKESIFDIFKVIGALKQRFGQVYVNFGEPIRLAGFLDQQQPGWREQALGPQFRPAWLNETTTRLGETVARHLNEAAAVNPVNLVALALLSTSRLALDESALTRVLDLYLTLLRKVPYSQHTTLPEGDGQALIEHVRGMNLLAEQKDALGRILYLDEANAVLMTYYRNNVLHIFALPALLASFFHSSSRMSRDLLGQYVHALYPYLQAELFLRWAPEQLDEVIDQWLAALVEQGLLRRENDLYVRPAPSSRQFVLLTLLARTITQTLQRFYMATSLLLNSGQNTLSAEALEDLCVMMAQRLSILHGLNAPEFFDKTLFRHFIQTLVEQGVLRPDGNGKLGYHDKLGELAEGVAKRVLSAELRLSIRQVALHREHALEASIL.

Positions 309-314 (CHRSHI) match the HXXXXD motif motif.

It belongs to the GPAT/DAPAT family.

It is found in the cell inner membrane. The enzyme catalyses sn-glycerol 3-phosphate + an acyl-CoA = a 1-acyl-sn-glycero-3-phosphate + CoA. It participates in phospholipid metabolism; CDP-diacylglycerol biosynthesis; CDP-diacylglycerol from sn-glycerol 3-phosphate: step 1/3. The polypeptide is Glycerol-3-phosphate acyltransferase (Pseudomonas putida (strain W619)).